Reading from the N-terminus, the 357-residue chain is Peptide chain release factor 1 (357 aa).

Q235 carries the post-translational modification N5-methylglutamine.

It belongs to the prokaryotic/mitochondrial release factor family. Methylated by PrmC. Methylation increases the termination efficiency of RF1.

Its subcellular location is the cytoplasm. Peptide chain release factor 1 directs the termination of translation in response to the peptide chain termination codons UAG and UAA. In Alkaliphilus metalliredigens (strain QYMF), this protein is Peptide chain release factor 1.